A 167-amino-acid polypeptide reads, in one-letter code: Protein-lysine myristoyltransferase RtxC (167 aa).

Residues His-20 and Asp-89 contribute to the active site.

Belongs to the RTX toxin acyltransferase family.

The protein localises to the cytoplasm. It carries out the reaction tetradecanoyl-[ACP] + L-lysyl-[protein] = N(6)-tetradecanoyl-L-lysyl-[protein] + holo-[ACP] + H(+). Protein-lysine myristoyltransferase that catalyzes myristoylation of the protoxin (RtxA) at two internal lysine residues, thereby converting it to the active toxin. The polypeptide is Protein-lysine myristoyltransferase RtxC (Kingella kingae).